The chain runs to 300 residues: uncharacterized protein (300 aa).

Helical transmembrane passes span 4 to 24 (IIII…WIAM), 31 to 51 (IPPF…LIIL), 68 to 88 (FQIF…LYGG), 95 to 115 (ISSI…HFYL), 120 to 140 (NFIQ…VLLI), 146 to 166 (CFFQ…HAVI), 177 to 197 (VSVI…LSII), 214 to 234 (ILAV…SYFY), 242 to 262 (FYAS…EIYI), and 272 to 292 (LWFI…INFF). 2 EamA domains span residues 15–139 (ITWG…FVLL) and 161–287 (LSHA…LTLI).

Belongs to the EamA transporter family.

It is found in the cell membrane. This is an uncharacterized protein from Buchnera aphidicola subsp. Schizaphis graminum (strain Sg).